Here is a 454-residue protein sequence, read N- to C-terminus: Ribosomal protein uS12 methylthiotransferase RimO (454 aa).

The MTTase N-terminal domain maps to 14-125; it reads SKVAFSHVGC…IAKVLDRVEK (112 aa). Positions 23, 59, 88, 163, 167, and 170 each coordinate [4Fe-4S] cluster. A Radical SAM core domain is found at 149–378; sequence DKNKFVAYLR…ISVQQNISKD (230 aa). Residues 381–452 form the TRAM domain; sequence QSYVGSKMKI…EYDLYGETIK (72 aa).

This sequence belongs to the methylthiotransferase family. RimO subfamily. [4Fe-4S] cluster serves as cofactor.

The protein resides in the cytoplasm. The catalysed reaction is L-aspartate(89)-[ribosomal protein uS12]-hydrogen + (sulfur carrier)-SH + AH2 + 2 S-adenosyl-L-methionine = 3-methylsulfanyl-L-aspartate(89)-[ribosomal protein uS12]-hydrogen + (sulfur carrier)-H + 5'-deoxyadenosine + L-methionine + A + S-adenosyl-L-homocysteine + 2 H(+). In terms of biological role, catalyzes the methylthiolation of an aspartic acid residue of ribosomal protein uS12. The polypeptide is Ribosomal protein uS12 methylthiotransferase RimO (Prochlorococcus marinus (strain MIT 9312)).